Reading from the N-terminus, the 113-residue chain is Integration host factor subunit alpha (113 aa).

Disordered regions lie at residues Gly59–Ile80 and Gln94–Glu113. Positions Asn104–Glu113 are enriched in pro residues.

The protein belongs to the bacterial histone-like protein family. As to quaternary structure, heterodimer of an alpha and a beta chain.

This protein is one of the two subunits of integration host factor, a specific DNA-binding protein that functions in genetic recombination as well as in transcriptional and translational control. The sequence is that of Integration host factor subunit alpha from Bordetella pertussis (strain Tohama I / ATCC BAA-589 / NCTC 13251).